Consider the following 332-residue polypeptide: MNELSNLSLESIERARERIEEHVFRTPLTTSRSLTELTGTQVSLKLEHYQRTGSFKLRGATNAILQLSPSDRARGVIAASTGNHGRALSYAAKAVGSRATICMSDLVPENKVSEIRKLGATVRIVGSSQDDAQVEVERLVAEEGLSMIPPFDHPHIIAGQRTVGLEIVEAMPDVAMVLLPLSGGGLAAGVAAAVKALRPHARIIGVTMDRGAAMKASIEAGHPVQVKEYRSLADSLGGGIGMANAWTFQMCRALLDDVVLVNEGEIAAGIRHAYEHERQILEGAGAVGIAALLSGKVAARGGSVGVVLSGQNIDMGLHREVINGVVRATEED.

N6-(pyridoxal phosphate)lysine is present on K56.

This sequence belongs to the serine/threonine dehydratase family. Pyridoxal 5'-phosphate is required as a cofactor.

It catalyses the reaction L-threonine = 2-oxobutanoate + NH4(+). It functions in the pathway amino-acid biosynthesis; L-isoleucine biosynthesis; 2-oxobutanoate from L-threonine: step 1/1. This Sinorhizobium fredii (strain NBRC 101917 / NGR234) protein is Putative threonine dehydratase.